A 103-amino-acid polypeptide reads, in one-letter code: Defensin-like protein 268 (103 aa).

A signal peptide spans 1 to 24; it reads MARLIFHFVFALILAAYLLSVTDA. 4 disulfides stabilise this stretch: Cys44–Cys103, Cys68–Cys87, Cys74–Cys98, and Cys78–Cys100.

Belongs to the DEFL family.

The protein resides in the secreted. This chain is Defensin-like protein 268, found in Arabidopsis thaliana (Mouse-ear cress).